Here is a 407-residue protein sequence, read N- to C-terminus: Membrane protein MosC (407 aa).

The segment at 1 to 24 is disordered; sequence MTRTSPRHHAPSETKRRVPMGGVH. Transmembrane regions (helical) follow at residues 31 to 51, 69 to 89, 109 to 129, 157 to 177, 186 to 206, 225 to 245, 255 to 275, 290 to 310, 316 to 336, 347 to 367, and 377 to 397; these read LTIT…AAWA, GVLL…AGYF, ALVL…IVLF, AFLH…FGVI, SVTL…HLLD, LLMF…IAEW, QVTD…MIAG, ALIA…LFMP, LAGF…IFSE, VGLT…PPII, and GRAL…SVFF.

It localises to the cell membrane. May be a membrane transport protein that could either transport a precursor for rhizopine biosynthesis into bacteroids or the finished product from the bacteroids. This is Membrane protein MosC (mosC) from Rhizobium meliloti (Ensifer meliloti).